A 289-amino-acid polypeptide reads, in one-letter code: Probable endonuclease 4 (289 aa).

Zn(2+)-binding residues include H74, H115, E150, D184, H187, H218, D231, H233, and E263.

This sequence belongs to the AP endonuclease 2 family. It depends on Zn(2+) as a cofactor.

The catalysed reaction is Endonucleolytic cleavage to 5'-phosphooligonucleotide end-products.. Endonuclease IV plays a role in DNA repair. It cleaves phosphodiester bonds at apurinic or apyrimidinic (AP) sites, generating a 3'-hydroxyl group and a 5'-terminal sugar phosphate. This chain is Probable endonuclease 4, found in Mycoplasma capricolum subsp. capricolum (strain California kid / ATCC 27343 / NCTC 10154).